Consider the following 601-residue polypeptide: N-acetyltransferase ESCO2 (601 aa).

Phosphoserine occurs at positions 29, 75, 223, and 244. The tract at residues 222–243 (SSLENEPSLGRTQKSKSEVIED) is disordered. Residues 282–305 (KEKLIKDSSDDRVSSKEHKVDKNE) show a composition bias toward basic and acidic residues. The segment at 282–315 (KEKLIKDSSDDRVSSKEHKVDKNEAFSSEDSLGE) is disordered. Over residues 306 to 315 (AFSSEDSLGE) the composition is skewed to polar residues. S312 bears the Phosphoserine mark. A CCHH-type zinc finger spans residues 387–411 (TVCKSCGMIYTASNPEDEMQHVQHH). Phosphoserine is present on S512.

This sequence belongs to the acetyltransferase family. ECO subfamily. In terms of tissue distribution, widely expressed in fetal tissues. In adult, it is expressed in thymus, placenta and small intestine.

The protein resides in the nucleus. Its subcellular location is the chromosome. It carries out the reaction L-lysyl-[protein] + acetyl-CoA = N(6)-acetyl-L-lysyl-[protein] + CoA + H(+). Acetyltransferase required for the establishment of sister chromatid cohesion. Couples the processes of cohesion and DNA replication to ensure that only sister chromatids become paired together. In contrast to the structural cohesins, the deposition and establishment factors are required only during the S phase. Acetylates the cohesin component SMC3. The sequence is that of N-acetyltransferase ESCO2 from Homo sapiens (Human).